The chain runs to 262 residues: Pyridoxine 5'-phosphate synthase (262 aa).

A 3-amino-2-oxopropyl phosphate-binding site is contributed by Asn-6. 8 to 9 (DH) is a 1-deoxy-D-xylulose 5-phosphate binding site. Arg-17 is a binding site for 3-amino-2-oxopropyl phosphate. His-43 functions as the Proton acceptor in the catalytic mechanism. 1-deoxy-D-xylulose 5-phosphate-binding residues include Arg-45 and His-50. Glu-70 serves as the catalytic Proton acceptor. Thr-102 lines the 1-deoxy-D-xylulose 5-phosphate pocket. His-215 serves as the catalytic Proton donor. 3-amino-2-oxopropyl phosphate is bound by residues Gly-216 and 237–238 (GH).

Belongs to the PNP synthase family. Homooctamer; tetramer of dimers.

The protein resides in the cytoplasm. The catalysed reaction is 3-amino-2-oxopropyl phosphate + 1-deoxy-D-xylulose 5-phosphate = pyridoxine 5'-phosphate + phosphate + 2 H2O + H(+). It functions in the pathway cofactor biosynthesis; pyridoxine 5'-phosphate biosynthesis; pyridoxine 5'-phosphate from D-erythrose 4-phosphate: step 5/5. Its function is as follows. Catalyzes the complicated ring closure reaction between the two acyclic compounds 1-deoxy-D-xylulose-5-phosphate (DXP) and 3-amino-2-oxopropyl phosphate (1-amino-acetone-3-phosphate or AAP) to form pyridoxine 5'-phosphate (PNP) and inorganic phosphate. The protein is Pyridoxine 5'-phosphate synthase of Helicobacter pylori (strain Shi470).